A 490-amino-acid chain; its full sequence is MQDIKIKSETGWKLDNTYADLPKTLFSKQNPTPVKAPKLVVLNQPLAESLGLKAEFLHDSDNVAIFAGNKIEEGSLPIAQAYAGHQFGYFNMLGDGRAILLGEQITPSGEKIDIQLKGSGRTPYSRGGDGRAALGPMLREYIISEAMQGLEIPTTRSLAVVTTGEPVIRENVLSGAILTRVASSHIRVATFQYAAKWGTIEELKALADYTIKRHFSDIDNLENPYIFLLQEVIKRQASLISKWQLVGFIHGVMNTDNMAISGETIDYGPCAFMDTYDLETVFSSIDREGRYSYGNQPPIAEWNLARFAETLLPLLHNNHEKSVEIAQNELSKFADLYHDNWLRGMISKLGIFNKESQDEALIENLLSIMYKYKADYTNTFSALTLDKYSDMELFKSKEFDKWHELWNARLNRQKESKESSNMLMKNSNPYVIPRNYRVEEALAAAEEGDYTVMNKLLHVLCNPYAYSDNQSEYEKLPQKSCGSYRTYCGT.

8 residues coordinate ATP: Gly94, Gly96, Arg97, Lys117, Asp129, Gly130, Arg180, and Arg187. The active-site Proton acceptor is the Asp256. Mg(2+) is bound by residues Asn257 and Asp266. Asp266 lines the ATP pocket.

It belongs to the SELO family. Mg(2+) serves as cofactor. Requires Mn(2+) as cofactor.

The catalysed reaction is L-seryl-[protein] + ATP = 3-O-(5'-adenylyl)-L-seryl-[protein] + diphosphate. It carries out the reaction L-threonyl-[protein] + ATP = 3-O-(5'-adenylyl)-L-threonyl-[protein] + diphosphate. It catalyses the reaction L-tyrosyl-[protein] + ATP = O-(5'-adenylyl)-L-tyrosyl-[protein] + diphosphate. The enzyme catalyses L-histidyl-[protein] + UTP = N(tele)-(5'-uridylyl)-L-histidyl-[protein] + diphosphate. The catalysed reaction is L-seryl-[protein] + UTP = O-(5'-uridylyl)-L-seryl-[protein] + diphosphate. It carries out the reaction L-tyrosyl-[protein] + UTP = O-(5'-uridylyl)-L-tyrosyl-[protein] + diphosphate. Functionally, nucleotidyltransferase involved in the post-translational modification of proteins. It can catalyze the addition of adenosine monophosphate (AMP) or uridine monophosphate (UMP) to a protein, resulting in modifications known as AMPylation and UMPylation. In Clostridium beijerinckii (strain ATCC 51743 / NCIMB 8052) (Clostridium acetobutylicum), this protein is Protein nucleotidyltransferase YdiU.